A 669-amino-acid chain; its full sequence is Major S-layer protein (669 aa).

The N-terminal stretch at 1-24 (MKRFAAVSLAALMLLTVFASAASA) is a signal peptide. N-linked (GlcNAc...) asparagine glycans are attached at residues Asn36, Asn70, Asn116, Asn600, and Asn607. Positions 588 to 648 (DGEVVDDDED…PTEADGTTPG (61 aa)) are disordered. Residues 590-627 (EVVDDDEDDDNVTEPVDNDTEVEEPTEEPTEGPTEEPT) are compositionally biased toward acidic residues. The chain crosses the membrane as a helical span at residues 645–665 (TTPGFGVVLGLVGLLAVVYLV).

It belongs to the Methanosarcinales S-layer protein family. Post-translationally, glycosylated.

It is found in the secreted. Its subcellular location is the cell wall. The protein localises to the S-layer. It localises to the cell membrane. Its function is as follows. S-layer protein. The S-layer is a paracrystalline mono-layered assembly of proteins which coat the surface of the cell. The chain is Major S-layer protein from Methanosarcina mazei (strain ATCC BAA-159 / DSM 3647 / Goe1 / Go1 / JCM 11833 / OCM 88) (Methanosarcina frisia).